The primary structure comprises 23 residues: Conotoxin Cl6c (23 aa).

Intrachain disulfides connect cysteine 2–cysteine 12, cysteine 5–cysteine 17, and cysteine 11–cysteine 21.

Expressed by the venom duct.

The protein localises to the secreted. This Californiconus californicus (California cone) protein is Conotoxin Cl6c.